Reading from the N-terminus, the 527-residue chain is Monooxygenase aurF (527 aa).

The N-terminal stretch at 1 to 19 (MPNPTVAIVGLGALGLVTL) is a signal peptide. Asn-59 is a glycosylation site (N-linked (GlcNAc...) asparagine).

The protein belongs to the FMO family. In terms of assembly, might be part of an extracellular enzyme complex composed of GIP1, aurF, aurO and aurS. The cofactor is FAD.

It is found in the secreted. It localises to the extracellular space. It participates in pigment biosynthesis. Its function is as follows. Monooxygenase; part of the gene cluster that mediates the biosynthesis of aurofusarin, a red mycelium pigment which is acting as a mycotoxin. The first step is performed by the polyketide synthase which condenses one acetyl-CoA and 6 malonyl-CoA units to form the first intermediate, the cyclic heptaketide and yellow pigment YWA1. The C2 hydroxyl group in the pyrone ring of YWA1 is probably formed during ring closure by an aldol-type cyclization reaction. The dehydratase aurZ then acts as the first tailoring enzyme in the aurofusarin biosynthetic pathway by converting YWA1 to nor-rubrofusarin. Nor-rubrofusarin is then methylated to rubrofusarin by the O-methyltransferase aurJ. Rubrofusarin is then transported across the plasma membrane by the rubrofusarin-specific pump aurT for further enzymatic processing by the extracellular complex composed of GIP1, aurF, aurO and aurS to yield aurofusarin. The protein is Monooxygenase aurF of Gibberella zeae (strain ATCC MYA-4620 / CBS 123657 / FGSC 9075 / NRRL 31084 / PH-1) (Wheat head blight fungus).